The sequence spans 283 residues: Phosphatidylglycerol--prolipoprotein diacylglyceryl transferase (283 aa).

4 helical membrane passes run 20-40, 60-80, 94-114, and 121-141; these read IGGF…IIGL, LVIW…VAFE, IWQG…AILV, and LSFW…QAIG. Residue Arg-142 participates in a 1,2-diacyl-sn-glycero-3-phospho-(1'-sn-glycerol) binding. 3 consecutive transmembrane segments (helical) span residues 183–203, 214–234, and 248–268; these read FLYE…LFFY, GTIT…IEGL, and QVVS…LYLL.

The protein belongs to the Lgt family.

The protein resides in the cell inner membrane. The enzyme catalyses L-cysteinyl-[prolipoprotein] + a 1,2-diacyl-sn-glycero-3-phospho-(1'-sn-glycerol) = an S-1,2-diacyl-sn-glyceryl-L-cysteinyl-[prolipoprotein] + sn-glycerol 1-phosphate + H(+). It participates in protein modification; lipoprotein biosynthesis (diacylglyceryl transfer). Catalyzes the transfer of the diacylglyceryl group from phosphatidylglycerol to the sulfhydryl group of the N-terminal cysteine of a prolipoprotein, the first step in the formation of mature lipoproteins. The chain is Phosphatidylglycerol--prolipoprotein diacylglyceryl transferase from Synechocystis sp. (strain ATCC 27184 / PCC 6803 / Kazusa).